The sequence spans 417 residues: MVLTNKQKEELNGAILDYFDSSGYKLTSTEFTKETNIELDPKLKGLLEKKWTSVIRLQKKVMDLEAKVSQLEEELNNGGRGPARRGKEDALPRQPEKHVLTGHRNCINAVRFHPLFSVIVSASEDATMRIWDFDSGDFERTLKGHTNAVQDIDFDKSGNLLASCSADLTIKLWDFQSFDCIKTLHGHDHNVSCVRFLPSGDQLVSSSRDKSIKVWETATGYCTKTLTGHEDWVRKVIVSEDGTTLASCSNDQTARVWNLAKGECLLTFREHSHVVECLAYSPANIVEVPGSLLSTPEGKAKAKAGAGGTSFGQAGYLATGSRDKTIKIWELATGRCLQTYIGHDNWVRSIKFHPCGKYLISVGDDKSIRVWDIAQGRCIKTINEAHSHFISCLDFCSHNPHIATGGVDDIIKIWKLG.

One can recognise a LisH domain in the interval 7–39 (QKEELNGAILDYFDSSGYKLTSTEFTKETNIEL). Residues 52–80 (TSVIRLQKKVMDLEAKVSQLEEELNNGGR) are a coiled coil. The segment at 72-93 (EEELNNGGRGPARRGKEDALPR) is disordered. 7 WD repeats span residues 102 to 143 (GHRN…RTLK), 144 to 185 (GHTN…KTLH), 186 to 225 (GHDH…CTKT), 228 to 267 (GHED…CLLT), 270 to 339 (EHSH…CLQT), 342 to 383 (GHDN…KTIN), and 385 to 417 (AHSH…WKLG).

It belongs to the WD repeat LIS1/nudF family.

It localises to the cytoplasm. The protein resides in the cytoskeleton. Its subcellular location is the microtubule organizing center. The protein localises to the centrosome. Positively regulates the activity of the minus-end directed microtubule motor protein dynein. May enhance dynein-mediated microtubule sliding by targeting dynein to the microtubule plus end. Required for several dynein- and microtubule-dependent processes. The polypeptide is Lissencephaly-1 homolog (Heterostelium pallidum (strain ATCC 26659 / Pp 5 / PN500) (Cellular slime mold)).